Reading from the N-terminus, the 354-residue chain is MSAVNPAGGDIAAGRSWPEVLNGLLDGRDQSADDTAWAMDRIMRGEATDAQIAGFLVALRAKGETVEEISGLVRAMYEHANLIEVPGATVDIVGTGGDGAKTVNISTMSSIVVAGTGAKVVKHGNRAASSASGSSDVLEKLGINLQLTPKRVAEVAEEAGITICFAVKFHPALRHVAAARGQLGIRTTFNVLGPLTNPARVKAQAVGVADPRMAPIVAGVFAERGNSSLVFRGDDGLDELTTTSTSRVWVVREGKVTEESFDPRDVGLDLVPVEALRGADAAYNADVARRLLNGETGPVRDAVLLNSAAALVALSPGAGTLAEQLRAGMAQAAEAIDSGAAKRALERWVAASNA.

5-phospho-alpha-D-ribose 1-diphosphate is bound by residues Gly-94, Gly-97 to Asp-98, Thr-102, Asn-104 to Thr-107, Lys-122 to Ser-130, and Ser-134. Residue Gly-94 participates in anthranilate binding. Ser-106 is a binding site for Mg(2+). An anthranilate-binding site is contributed by Asn-125. Arg-180 contributes to the anthranilate binding site. Residues Asp-238 and Glu-239 each contribute to the Mg(2+) site.

The protein belongs to the anthranilate phosphoribosyltransferase family. In terms of assembly, homodimer. Requires Mg(2+) as cofactor.

The enzyme catalyses N-(5-phospho-beta-D-ribosyl)anthranilate + diphosphate = 5-phospho-alpha-D-ribose 1-diphosphate + anthranilate. It participates in amino-acid biosynthesis; L-tryptophan biosynthesis; L-tryptophan from chorismate: step 2/5. Catalyzes the transfer of the phosphoribosyl group of 5-phosphorylribose-1-pyrophosphate (PRPP) to anthranilate to yield N-(5'-phosphoribosyl)-anthranilate (PRA). The sequence is that of Anthranilate phosphoribosyltransferase from Streptomyces avermitilis (strain ATCC 31267 / DSM 46492 / JCM 5070 / NBRC 14893 / NCIMB 12804 / NRRL 8165 / MA-4680).